The primary structure comprises 308 residues: Energy-coupling factor transporter ATP-binding protein EcfA2 (308 aa).

The 261-residue stretch at 3-263 folds into the ABC transporter domain; the sequence is IEVKNISKVF…VDFLRENEME (261 aa). 40 to 47 contributes to the ATP binding site; it reads GPTGSGKT.

This sequence belongs to the ABC transporter superfamily. Energy-coupling factor EcfA family. In terms of assembly, forms a stable energy-coupling factor (ECF) transporter complex composed of 2 membrane-embedded substrate-binding proteins (S component), 2 ATP-binding proteins (A component) and 2 transmembrane proteins (T component).

The protein localises to the cell membrane. Functionally, ATP-binding (A) component of a common energy-coupling factor (ECF) ABC-transporter complex. Unlike classic ABC transporters this ECF transporter provides the energy necessary to transport a number of different substrates. The chain is Energy-coupling factor transporter ATP-binding protein EcfA2 from Mycoplasma mobile (strain ATCC 43663 / 163K / NCTC 11711) (Mesomycoplasma mobile).